The chain runs to 329 residues: G-protein coupled bile acid receptor 1 (329 aa).

Residues 1–18 are Extracellular-facing; sequence MMSHNTTELSAIPRGVQE. N-linked (GlcNAc...) asparagine glycosylation occurs at asparagine 5. Residues 19-39 form a helical membrane-spanning segment; sequence LSLVLASLIVIANLLLALGIV. The Cytoplasmic portion of the chain corresponds to 40–49; that stretch reads LDRHLRSPPA. Residues 50–70 traverse the membrane as a helical segment; the sequence is GCFFLSLLLAGLLTGLALPTL. The Extracellular segment spans residues 71–84; that stretch reads PGLWNRSHQGYWSC. N-linked (GlcNAc...) asparagine glycosylation is present at asparagine 75. An intrachain disulfide couples cysteine 84 to cysteine 154. Residues 85–105 traverse the membrane as a helical segment; it reads LLLHLAPNFCFLSLLANLLLV. The Cytoplasmic segment spans residues 106–124; that stretch reads HGERYMAVLQPLRPHGSVR. A helical transmembrane segment spans residues 125-145; that stretch reads LALFLTWISSLLFASLPALGW. The Extracellular segment spans residues 146–157; the sequence is NHWSPGANCSSQ. Residue asparagine 153 is glycosylated (N-linked (GlcNAc...) asparagine). The chain crosses the membrane as a helical span at residues 158-178; sequence AIFPAPYLYLEVYGLLLPAVG. Residues 179 to 229 are Cytoplasmic-facing; it reads ATALLSVRVLATAHHQLREIRRLERAVCRDAPSTLARALTWRQARAQAGAT. A helical membrane pass occupies residues 230 to 250; it reads LLFLLCWGPYVATLLLSVLAY. Over 251-260 the chain is Extracellular; it reads ERRPPLGPVT. A helical membrane pass occupies residues 261 to 281; the sequence is LLSLISLGSASAAVVPVAMGL. Over 282-329 the chain is Cytoplasmic; the sequence is GDQRYTAPWRTAAQRWLQVLRGRPKRANPGPSTAYHSSSQCSTDLDLN. The disordered stretch occupies residues 306–329; it reads KRANPGPSTAYHSSSQCSTDLDLN. Residues 311 to 329 are compositionally biased toward polar residues; that stretch reads GPSTAYHSSSQCSTDLDLN.

It belongs to the G-protein coupled receptor 1 family.

Its subcellular location is the cell membrane. In terms of biological role, receptor for bile acid. Bile acid-binding induces its internalization, activation of extracellular signal-regulated kinase and intracellular cAMP production. May be involved in the suppression of macrophage functions by bile acids. Involved in bile acid promoted GLP1R secretion. The chain is G-protein coupled bile acid receptor 1 (Gpbar1) from Rattus norvegicus (Rat).